The primary structure comprises 154 residues: MHCPFCGANDTKVIDSRLVAEGEQVRRRRECVACGERFTTFETAELVLPRLIKQDGTRQPFDEEKLRAGMQRALEKRPVSVERLEAALAHIKSRLRATGEREVKSLVVGELVMAELRKLDEVAYIRFASVYRRFQDLDEFREEIDRLAREPAKE.

A zinc finger lies at 3–34 (CPFCGANDTKVIDSRLVAEGEQVRRRRECVAC). One can recognise an ATP-cone domain in the interval 49-139 (PRLIKQDGTR…VYRRFQDLDE (91 aa)).

The protein belongs to the NrdR family. It depends on Zn(2+) as a cofactor.

Its function is as follows. Negatively regulates transcription of bacterial ribonucleotide reductase nrd genes and operons by binding to NrdR-boxes. In Pseudomonas putida (strain W619), this protein is Transcriptional repressor NrdR.